A 382-amino-acid chain; its full sequence is D-galactonate dehydratase (382 aa).

Asp183 is a Mg(2+) binding site. His185 (proton donor) is an active-site residue. Mg(2+) is bound by residues Glu209 and Glu235. The active-site Proton acceptor is the His285.

The protein belongs to the mandelate racemase/muconate lactonizing enzyme family. GalD subfamily. It depends on Mg(2+) as a cofactor.

It catalyses the reaction D-galactonate = 2-dehydro-3-deoxy-D-galactonate + H2O. It functions in the pathway carbohydrate acid metabolism; D-galactonate degradation; D-glyceraldehyde 3-phosphate and pyruvate from D-galactonate: step 1/3. Catalyzes the dehydration of D-galactonate to 2-keto-3-deoxy-D-galactonate. This Escherichia coli (strain 55989 / EAEC) protein is D-galactonate dehydratase.